Consider the following 228-residue polypeptide: MTSDEVRDGAGSPADSSKGNKCTAAGMFQAAKRSTVSAARNIPAFDDLPVPSDTANLREGANLNSTLLALLPLVGVWRGEGEGRGPNGDYHFGQQIVVSHDGGNYLNWEARSWRLNDAGEYQETSLRETGFWRFVSDPYDPTESQAIELLLAHSAGYVELFYGRPRNASSWELVTDALACSKSGVLVGGAKRLYGIVEGGDLAYVEERVDADGGLVPNLSARLYRFAG.

A disordered region spans residues 1 to 21 (MTSDEVRDGAGSPADSSKGNK). The GXWXGXG motif lies at 75–81 (GVWRGEG).

This sequence belongs to the nitrobindin family.

This is Ferric nitrobindin-like protein from Mycobacterium leprae (strain TN).